A 953-amino-acid polypeptide reads, in one-letter code: Nonsense-mediated mRNA decay factor SMG8 (953 aa).

Disordered regions lie at residues Ala-571–Pro-604 and Pro-629–Asn-653. Positions Ala-574–Pro-586 are enriched in acidic residues. Residues Ile-595–Pro-604 show a composition bias toward polar residues. Low complexity predominate over residues Ser-634 to Asn-653.

This sequence belongs to the SMG8 family.

In terms of biological role, involved in nonsense-mediated decay (NMD) of mRNAs containing premature stop codons. Probable component of kinase complex containing nonC and recruited to stalled ribosomes. In Drosophila persimilis (Fruit fly), this protein is Nonsense-mediated mRNA decay factor SMG8.